The primary structure comprises 124 residues: U33-theraphotoxin-Cg1a (124 aa).

Positions 1–17 (MKFAVAIAFTLLVCVFA) are cleaved as a signal peptide. 5 disulfide bridges follow: Cys-26/Cys-37, Cys-31/Cys-51, Cys-36/Cys-75, Cys-61/Cys-83, and Cys-77/Cys-94. Residues 93-108 (RCQEESGKSDKSKESQ) show a composition bias toward basic and acidic residues. The segment at 93–124 (RCQEESGKSDKSKESQGSDESEESEESKESCG) is disordered. Residues 109–118 (GSDESEESEE) show a composition bias toward acidic residues.

The protein belongs to the neurotoxin 32 family. Expressed by the venom gland.

The protein localises to the secreted. The polypeptide is U33-theraphotoxin-Cg1a (Chilobrachys guangxiensis (Chinese earth tiger tarantula)).